Consider the following 366-residue polypeptide: uncharacterized protein (366 aa).

A PINc domain is found at Ile169 to Val280. Position 250 (Asp250) interacts with Mg(2+). The TRAM domain maps to Val295–Phe356.

The protein belongs to the ycf81 family. It in the central section; belongs to the PINc/VapC protein family. Requires Mg(2+) as cofactor.

In terms of biological role, an RNase. This is an uncharacterized protein from Bacillus subtilis (strain 168).